A 158-amino-acid chain; its full sequence is GTP-dependent dephospho-CoA kinase (158 aa).

Asp35, Val36, Asp54, Lys56, Glu109, and Asp132 together coordinate GTP.

This sequence belongs to the GTP-dependent DPCK family.

It catalyses the reaction 3'-dephospho-CoA + GTP = GDP + CoA + H(+). It functions in the pathway cofactor biosynthesis; coenzyme A biosynthesis. Catalyzes the GTP-dependent phosphorylation of the 3'-hydroxyl group of dephosphocoenzyme A to form coenzyme A (CoA). The protein is GTP-dependent dephospho-CoA kinase of Methanococcus maripaludis (strain DSM 14266 / JCM 13030 / NBRC 101832 / S2 / LL).